The following is a 593-amino-acid chain: High affinity cGMP-specific 3',5'-cyclic phosphodiesterase 9A (593 aa).

Positions 87–142 are disordered; sequence SAGVEDKRTTSRGQSAERPLRDRRVVGLEQPRREGAFESGQVEPRPREPQGCCQEG. Positions 104-122 are enriched in basic and acidic residues; sequence RPLRDRRVVGLEQPRREGA. Residues 236–557 form the PDEase domain; the sequence is PRRDVPTYPK…DRYEELKRID (322 aa). The active-site Proton donor is the His-312. 312–316 contacts 3',5'-cyclic GMP; it reads HNFRH. Zn(2+)-binding residues include His-316, His-352, and Asp-353. Residue Asp-353 coordinates 3',5'-cyclic GMP. Mg(2+) is bound at residue Asp-353. Ser-379 is modified (phosphoserine). 3',5'-cyclic GMP contacts are provided by residues Asp-462, Tyr-484, and 512-513; that span reads AQ. A Zn(2+)-binding site is contributed by Asp-462. A disordered region spans residues 564 to 593; sequence QKKTDSLTSGATEKSRERSRDVKNSEGDCA. Residues 576-593 are compositionally biased toward basic and acidic residues; that stretch reads EKSRERSRDVKNSEGDCA.

It belongs to the cyclic nucleotide phosphodiesterase family. PDE9 subfamily. As to quaternary structure, homodimer. The cofactor is Zn(2+). Requires Mg(2+) as cofactor.

It is found in the cell projection. The protein localises to the ruffle membrane. It localises to the cytoplasm. The protein resides in the perinuclear region. Its subcellular location is the golgi apparatus. It is found in the endoplasmic reticulum. The protein localises to the cell membrane. It localises to the sarcolemma. The enzyme catalyses 3',5'-cyclic GMP + H2O = GMP + H(+). Its pathway is purine metabolism; 3',5'-cyclic GMP degradation; GMP from 3',5'-cyclic GMP: step 1/1. Specifically inhibited by a compound named 3r ((R)-2-((1-cyclopentyl-4-hydroxy-1H-pyrazolo[3,4-d]pyrimidin-6- yl)amino)-N-(4-methoxyphenyl)propanamide); the inhibitor forms a hydrogen bond with Tyr-484, Ala-512 and Gln-513. Specifically hydrolyzes the second messenger cGMP, which is a key regulator of many important physiological processes. Highly specific: compared to other members of the cyclic nucleotide phosphodiesterase family, has the highest affinity and selectivity for cGMP. Specifically regulates natriuretic-peptide-dependent cGMP signaling in heart, acting as a regulator of cardiac hypertrophy in myocytes and muscle. Does not regulate nitric oxide-dependent cGMP in heart. Additional experiments are required to confirm whether its ability to hydrolyze natriuretic-peptide-dependent cGMP is specific to heart or is a general feature of the protein. In brain, involved in cognitive function, such as learning and long-term memory. The sequence is that of High affinity cGMP-specific 3',5'-cyclic phosphodiesterase 9A (PDE9A) from Pan troglodytes (Chimpanzee).